Consider the following 254-residue polypeptide: HLA class II histocompatibility antigen, DQ alpha 1 chain (254 aa).

Positions 1-23 (MILNKALMLGALALTTVMSPCGG) are cleaved as a signal peptide. An alpha-1 region spans residues 24–119 (EDIVADHVAS…EVPEVTVFSK (96 aa)). The Extracellular segment spans residues 24–216 (EDIVADHVAS…IPAPMSELTE (193 aa)). Residues asparagine 103 and asparagine 143 are each glycosylated (N-linked (GlcNAc...) asparagine). The region spanning 112 to 204 (PEVTVFSKSP…LDKPLLKHWE (93 aa)) is the Ig-like C1-type domain. The tract at residues 120 to 203 (SPVTLGQPNI…GLDKPLLKHW (84 aa)) is alpha-2. Cysteine 132 and cysteine 188 form a disulfide bridge. The interval 204 to 216 (EPEIPAPMSELTE) is connecting peptide. A helical transmembrane segment spans residues 217–239 (TVVCALGLSVGLVGIVVGTVFII). Residues 240–254 (RGLRSVGASRHQGPL) are Cytoplasmic-facing.

It belongs to the MHC class II family. As to quaternary structure, heterodimer of an alpha and a beta subunit; also referred as MHC class II molecule. In the endoplasmic reticulum (ER) it forms a heterononamer; 3 MHC class II molecules bind to a CD74 homotrimer (also known as invariant chain or HLA class II histocompatibility antigen gamma chain). In the endosomal/lysosomal system; CD74 undergoes sequential degradation by various proteases; leaving a small fragment termed CLIP on each MHC class II molecule. MHC class II molecule interacts with HLA_DM, and HLA_DO in B-cells, in order to release CLIP and facilitate the binding of antigenic peptides.

The protein resides in the cell membrane. It localises to the endoplasmic reticulum membrane. Its subcellular location is the golgi apparatus. It is found in the trans-Golgi network membrane. The protein localises to the endosome membrane. The protein resides in the lysosome membrane. Its function is as follows. Binds peptides derived from antigens that access the endocytic route of antigen presenting cells (APC) and presents them on the cell surface for recognition by the CD4 T-cells. The peptide binding cleft accommodates peptides of 10-30 residues. The peptides presented by MHC class II molecules are generated mostly by degradation of proteins that access the endocytic route, where they are processed by lysosomal proteases and other hydrolases. Exogenous antigens that have been endocytosed by the APC are thus readily available for presentation via MHC II molecules, and for this reason this antigen presentation pathway is usually referred to as exogenous. As membrane proteins on their way to degradation in lysosomes as part of their normal turn-over are also contained in the endosomal/lysosomal compartments, exogenous antigens must compete with those derived from endogenous components. Autophagy is also a source of endogenous peptides, autophagosomes constitutively fuse with MHC class II loading compartments. In addition to APCs, other cells of the gastrointestinal tract, such as epithelial cells, express MHC class II molecules and CD74 and act as APCs, which is an unusual trait of the GI tract. To produce a MHC class II molecule that presents an antigen, three MHC class II molecules (heterodimers of an alpha and a beta chain) associate with a CD74 trimer in the ER to form a heterononamer. Soon after the entry of this complex into the endosomal/lysosomal system where antigen processing occurs, CD74 undergoes a sequential degradation by various proteases, including CTSS and CTSL, leaving a small fragment termed CLIP (class-II-associated invariant chain peptide). The removal of CLIP is facilitated by HLA-DM via direct binding to the alpha-beta-CLIP complex so that CLIP is released. HLA-DM stabilizes MHC class II molecules until primary high affinity antigenic peptides are bound. The MHC II molecule bound to a peptide is then transported to the cell membrane surface. In B-cells, the interaction between HLA-DM and MHC class II molecules is regulated by HLA-DO. Primary dendritic cells (DCs) also to express HLA-DO. Lysosomal microenvironment has been implicated in the regulation of antigen loading into MHC II molecules, increased acidification produces increased proteolysis and efficient peptide loading. The polypeptide is HLA class II histocompatibility antigen, DQ alpha 1 chain (HLA-DQA1) (Homo sapiens (Human)).